Reading from the N-terminus, the 123-residue chain is Class II hydrophobin 2 (123 aa).

The N-terminal stretch at 1–16 (MRSFLVIATLAVGAFG) is a signal peptide. Intrachain disulfides connect Cys22-Cys70, Cys32-Cys61, Cys33-Cys45, and Cys71-Cys82.

The protein belongs to the cerato-ulmin hydrophobin family. As to quaternary structure, homodimer. Homodimers further self-assemble to form highly ordered films at water-air interfaces through intermolecular interactions.

The protein localises to the secreted. It is found in the cell wall. In terms of biological role, aerial growth, conidiation, and dispersal of filamentous fungi in the environment rely upon a capability of their secreting small amphipathic proteins called hydrophobins (HPBs) with low sequence identity. Class I can self-assemble into an outermost layer of rodlet bundles on aerial cell surfaces, conferring cellular hydrophobicity that supports fungal growth, development and dispersal; whereas Class II form highly ordered films at water-air interfaces through intermolecular interactions but contribute nothing to the rodlet structure. Hyd2 is a class II hydrophobin that plays probably a role in intraspecific signaling or hyphal fusion. Not necessary for root adhesion and colonization. Might play an essential role since no deletion mutants could be obtained. The sequence is that of Class II hydrophobin 2 from Bionectria ochroleuca (Gliocladium roseum).